The chain runs to 380 residues: Methenyltetrahydrofolate synthase domain-containing protein (380 aa).

Residues 245–258 (EEQAGKDVTLRDGP) are compositionally biased toward basic and acidic residues. Disordered stretches follow at residues 245-283 (EEQAGKDVTLRDGPRSPPGATRSPRDLAPPELGSVPLSS) and 361-380 (LVGSHTAEPLPDHQPAIAGP). Residues 282–355 (SSVQIGNLPR…NTVRVVLARQ (74 aa)) enclose the RRM domain.

The sequence is that of Methenyltetrahydrofolate synthase domain-containing protein (MTHFSD) from Bos taurus (Bovine).